Reading from the N-terminus, the 444-residue chain is Homogentisate 1,2-dioxygenase (444 aa).

His-298 functions as the Proton acceptor in the catalytic mechanism. 2 residues coordinate Fe cation: His-341 and Glu-347. 2 residues coordinate homogentisate: Tyr-356 and His-377. His-377 serves as a coordination point for Fe cation.

The protein belongs to the homogentisate dioxygenase family. In terms of assembly, hexamer; dimer of trimers. The cofactor is Fe cation.

It carries out the reaction homogentisate + O2 = 4-maleylacetoacetate + H(+). It participates in amino-acid degradation; L-phenylalanine degradation; acetoacetate and fumarate from L-phenylalanine: step 4/6. In terms of biological role, involved in the catabolism of homogentisate (2,5-dihydroxyphenylacetate or 2,5-OH-PhAc), a central intermediate in the degradation of phenylalanine and tyrosine. Catalyzes the oxidative ring cleavage of the aromatic ring of homogentisate to yield maleylacetoacetate. This Burkholderia cenocepacia (strain ATCC BAA-245 / DSM 16553 / LMG 16656 / NCTC 13227 / J2315 / CF5610) (Burkholderia cepacia (strain J2315)) protein is Homogentisate 1,2-dioxygenase.